Consider the following 93-residue polypeptide: Cell division protein CrgA (93 aa).

Helical transmembrane passes span V31–F51 and L70–M90.

It belongs to the CrgA family.

Its subcellular location is the cell membrane. Its function is as follows. Involved in cell division. This is Cell division protein CrgA from Mycobacterium bovis (strain ATCC BAA-935 / AF2122/97).